Here is a 1037-residue protein sequence, read N- to C-terminus: Sodium/potassium exporting P-type ATPase cta3 (1037 aa).

At 1–61 (MVTINISNPV…GVSAWKVLLR (61 aa)) the chain is on the cytoplasmic side. The helical transmembrane segment at 62-82 (QVLNAMCVVLILAAALSFGTT) threads the bilayer. Asp-83 is a topological domain (extracellular). Residues 84 to 104 (WIEGGVISAIIVLNITVGFIQ) traverse the membrane as a helical segment. Over 105-281 (EYKAEKTMDS…LNVGTPLQRK (177 aa)) the chain is Cytoplasmic. Residues 282–302 (LTVLAYILFCIAIILAIIVMA) form a helical membrane-spanning segment. The Extracellular portion of the chain corresponds to 303–313 (AHSFHVTNEVS). Residues 314-334 (IYAISLGISIIPESLIAVLSI) traverse the membrane as a helical segment. Residues 335–760 (TMAMGQKNMS…GRRMFDNIMR (426 aa)) lie on the Cytoplasmic side of the membrane. Asp-368 (4-aspartylphosphate intermediate) is an active-site residue. Positions 368 and 370 each coordinate Mg(2+). Thr-370, Glu-468, Lys-520, Arg-559, Thr-620, Gly-621, Asp-622, Arg-678, and Lys-684 together coordinate ATP. Residue Asp-703 coordinates Mg(2+). Residue Asn-706 coordinates ATP. The helical transmembrane segment at 761 to 781 (FVLHLLVSNVGEVILLVVGLA) threads the bilayer. Topologically, residues 782-787 (FRDEVH) are extracellular. A helical membrane pass occupies residues 788–808 (LSVFPMSPVEILWCNMITSSF). The Cytoplasmic segment spans residues 809 to 844 (PSMGLGMELAQPDVMERLPHDNKVGIFQKSLIVDMM). Residues 845-865 (VYGFFLGVVSLMTWVVIMYGF) form a helical membrane-spanning segment. Over 866 to 889 (GTGNLSYDCNAHYHAGCNDVFKAR) the chain is Extracellular. N-linked (GlcNAc...) asparagine glycosylation is present at Asn-869. A helical membrane pass occupies residues 890-910 (SAVFAVVTFCILIMAVEVKNF). The Cytoplasmic portion of the chain corresponds to 911-939 (DNSLFNLHGIPWGEWNFRYFLHTLVENKF). A helical transmembrane segment spans residues 940-960 (LAWAIALAAVSVFPTIYIPVI). The Extracellular portion of the chain corresponds to 961 to 969 (NRDVFKHTY). The helical transmembrane segment at 970–990 (IGWEWGVVAVAVMFYFFYVEI) threads the bilayer. The Cytoplasmic segment spans residues 991 to 1037 (WKSIRRSLTNPQKKGKFRRTLSNTITTESKLSEKDLEHRLFLQSRRA). Position 1012 is a phosphoserine (Ser-1012).

The protein belongs to the cation transport ATPase (P-type) (TC 3.A.3) family. Type IID subfamily. The cofactor is Mg(2+). In terms of processing, the active site is phosphorylated in presence of sodium or potassium and in conditions of higher pH. Not phosphorylated in presence of calcium ions.

It is found in the cell membrane. The catalysed reaction is Na(+)(in) + ATP + H2O = Na(+)(out) + ADP + phosphate + H(+). It catalyses the reaction K(+)(in) + ATP + H2O = K(+)(out) + ADP + phosphate + H(+). In terms of biological role, catalyzes the hydrolysis of ATP coupled with the export of sodium and potassium from the cell. May export sodium less efficiently. May transport other cations such as lithium. Sodium/potassium efflux ATPases are involved in salt tolerance and maintaining the membrane potential across the plasma membrane in high salinity (Na+) or alkaline (K+) environments. This chain is Sodium/potassium exporting P-type ATPase cta3, found in Schizosaccharomyces pombe (strain 972 / ATCC 24843) (Fission yeast).